We begin with the raw amino-acid sequence, 28 residues long: Conotoxin Cl5.3 (28 aa).

The protein belongs to the conotoxin T superfamily. Post-translationally, contains 2 disulfide bonds that can be either 'C1-C3, C2-C4' or 'C1-C4, C2-C3', since these disulfide connectivities have been observed for conotoxins with cysteine framework V (for examples, see AC P0DQQ7 and AC P81755). As to expression, expressed by the venom duct.

It is found in the secreted. The polypeptide is Conotoxin Cl5.3 (Californiconus californicus (California cone)).